We begin with the raw amino-acid sequence, 398 residues long: Acetate kinase (398 aa).

Asn-9 contributes to the Mg(2+) binding site. Residue Lys-16 participates in ATP binding. Arg-90 contacts substrate. Asp-147 acts as the Proton donor/acceptor in catalysis. ATP contacts are provided by residues 207 to 211 (HIGNG), 282 to 284 (DLR), and 330 to 334 (GVGEN). Glu-384 provides a ligand contact to Mg(2+).

The protein belongs to the acetokinase family. As to quaternary structure, homodimer. Requires Mg(2+) as cofactor. The cofactor is Mn(2+).

It is found in the cytoplasm. It carries out the reaction acetate + ATP = acetyl phosphate + ADP. It functions in the pathway metabolic intermediate biosynthesis; acetyl-CoA biosynthesis; acetyl-CoA from acetate: step 1/2. Functionally, catalyzes the formation of acetyl phosphate from acetate and ATP. Can also catalyze the reverse reaction. The sequence is that of Acetate kinase from Staphylococcus carnosus (strain TM300).